A 521-amino-acid polypeptide reads, in one-letter code: AAA ATPase forming ring-shaped complexes (521 aa).

Residues 4 to 44 (TEDLAALNDRLMAKNHALAEALNRAGKELTKAKSRLAQLAQ) are a coiled coil. 235–240 (GNGKTM) contacts ATP.

This sequence belongs to the AAA ATPase family. Homohexamer. Assembles into a hexameric ring structure.

This is AAA ATPase forming ring-shaped complexes from Bifidobacterium longum subsp. infantis (strain ATCC 15697 / DSM 20088 / JCM 1222 / NCTC 11817 / S12).